Consider the following 99-residue polypeptide: DNA-binding protein Fis (99 aa).

A DNA-binding region (H-T-H motif) is located at residues 75–94; that stretch reads QTRAATMLGINRGTLRKKLK.

The protein belongs to the transcriptional regulatory Fis family. As to quaternary structure, homodimer.

Activates ribosomal RNA transcription. Plays a direct role in upstream activation of rRNA promoters. The polypeptide is DNA-binding protein Fis (Pasteurella multocida (strain Pm70)).